The sequence spans 335 residues: 2,4-dienoyl-CoA reductase [(3E)-enoyl-CoA-producing], mitochondrial (335 aa).

A mitochondrion-targeting transit peptide spans 1–34; that stretch reads MKLPARVFFTLGSRLPCGLAPRRFFSYGTKILYQ. 2 positions are modified to N6-acetyllysine; alternate: K42 and K49. N6-succinyllysine; alternate is present on residues K42 and K49. 66-71 is an NADP(+) binding site; that stretch reads GGGTGL. Phosphothreonine is present on T69. At K73 the chain carries N6-succinyllysine. R91 is an NADP(+) binding site. R91 is a substrate binding site. K97 carries the N6-acetyllysine; alternate modification. K97 carries the post-translational modification N6-succinyllysine; alternate. Residue D117 participates in NADP(+) binding. Residues R119, F149, and S157 each coordinate substrate. Y199 serves as the catalytic Proton acceptor. K214 is an NADP(+) binding site. An N6-acetyllysine modification is found at K230. 240–243 lines the NADP(+) pocket; sequence PGPI. At K244 the chain carries N6-acetyllysine; alternate. At K244 the chain carries N6-succinyllysine; alternate. R251 lines the substrate pocket. An N6-acetyllysine; alternate mark is found at K260 and K319. 2 positions are modified to N6-succinyllysine; alternate: K260 and K319.

The protein belongs to the short-chain dehydrogenases/reductases (SDR) family. 2,4-dienoyl-CoA reductase subfamily. Homotetramer. Heart = liver = pancreas &gt; kidney &gt;&gt; skeletal muscle = lung.

The protein localises to the mitochondrion. The catalysed reaction is a (2E,4E)-dienoyl-CoA + NADPH + H(+) = a 4,5-saturated-(3E)-enoyl-CoA + NADP(+). It carries out the reaction a (2E,4Z)-dienoyl-CoA + NADPH + H(+) = a 4,5-saturated-(3E)-enoyl-CoA + NADP(+). It catalyses the reaction (2E,4E)-hexadienoyl-CoA + NADPH + H(+) = (3E)-hexenoyl-CoA + NADP(+). Functionally, auxiliary enzyme of beta-oxidation. It participates in the metabolism of unsaturated fatty enoyl-CoA esters having double bonds in both even- and odd-numbered positions in mitochondria. Catalyzes the NADP-dependent reduction of 2,4-dienoyl-CoA to yield trans-3-enoyl-CoA. In Homo sapiens (Human), this protein is 2,4-dienoyl-CoA reductase [(3E)-enoyl-CoA-producing], mitochondrial (DECR1).